Here is a 324-residue protein sequence, read N- to C-terminus: MTSTGSTRYDGDSWDLASSVGVTATMVAAARAMATRAENPLINDPYAEPLVRAVGVDLLTRLATGEFNVADLDDDPQRPLGPLGDVADNMAVRTRFFDDFFLDATRAGLEQVVILASGLDARAYRLPWPPQTVVYEIDLPQVIEFKSRTLADLGAAPTADRRVVAVDLREDWPAALRAAGFDPNQPTAWSAEGLLGYLPPEAQDRLLDTVTELSAPGSRLAAECLSSVDPGEEEQIKERMQEVSARWRAHGFDVDMVGLVYFGDRNEAVPYLSDRGWLLTSTPLPELRAANGLAPAAVDDDGPSVDMLYVSGTLYTTPRPDPAP.

S-adenosyl-L-methionine is bound by residues D138 and D167 to L168.

Belongs to the UPF0677 family.

Functionally, exhibits S-adenosyl-L-methionine-dependent methyltransferase activity. The protein is Putative S-adenosyl-L-methionine-dependent methyltransferase MMAR_1059 of Mycobacterium marinum (strain ATCC BAA-535 / M).